A 932-amino-acid chain; its full sequence is Protocadherin gamma-A3 (932 aa).

Positions 1 to 29 are cleaved as a signal peptide; the sequence is MTNCLSFRNGRGLALLCALLGTLCETGSG. Cadherin domains lie at 30-133, 134-242, 243-347, 348-452, 453-562, and 570-682; these read QIRY…APNF, PTEE…PPMF, TQPE…APEI, TITS…PPTF, PHLS…APEI, and DGST…EPSA. Residues 30–692 are Extracellular-facing; sequence QIRYSVSEEL…KPNDSDLTLY (663 aa). N-linked (GlcNAc...) asparagine glycans are attached at residues asparagine 265, asparagine 419, and asparagine 545. Asparagine 685 carries an N-linked (GlcNAc...) asparagine glycan. A helical membrane pass occupies residues 693–713; sequence LVVAVAAVSCVFLAFVIVLLA. Residues 714 to 932 lie on the Cytoplasmic side of the membrane; it reads LRLRRWHKSR…KKKSGKKEKK (219 aa). Disordered stretches follow at residues 805-841 and 902-932; these read NLLQ…WPNN and ATLT…KEKK. Over residues 922 to 932 the composition is skewed to basic residues; that stretch reads NKKKSGKKEKK.

The protein resides in the cell membrane. In terms of biological role, potential calcium-dependent cell-adhesion protein. May be involved in the establishment and maintenance of specific neuronal connections in the brain. In Homo sapiens (Human), this protein is Protocadherin gamma-A3 (PCDHGA3).